We begin with the raw amino-acid sequence, 216 residues long: MNIILLGPPGAGKGTQATNICQKYSIPQISTGDMLREAVKADTPLGIEAKKVMDVGGLISDDIIIGLVKERIQENDCKNGFLFDGFPRTIVQAEALKTDGVKIDFVVEIQVPYEDIIARMSGRRAHLTSGRTYHIVYNPPKVEGIDDITGEELIQRTDDAEDTVRARLNIYHKQTKPLVDYYQSWMNKNSDAPKYGAVVGVGTLDEVRDRVYAQLN.

10–15 (GAGKGT) contributes to the ATP binding site. The NMP stretch occupies residues 30-59 (STGDMLREAVKADTPLGIEAKKVMDVGGLI). Residues Thr-31, Arg-36, 57-59 (GLI), 85-88 (GFPR), and Gln-92 each bind AMP. Residues 122-159 (GRRAHLTSGRTYHIVYNPPKVEGIDDITGEELIQRTDD) form an LID region. ATP contacts are provided by residues Arg-123 and 132–133 (TY). AMP contacts are provided by Arg-156 and Arg-167. Residue Gly-202 participates in ATP binding.

Belongs to the adenylate kinase family. Monomer.

It localises to the cytoplasm. The enzyme catalyses AMP + ATP = 2 ADP. It functions in the pathway purine metabolism; AMP biosynthesis via salvage pathway; AMP from ADP: step 1/1. In terms of biological role, catalyzes the reversible transfer of the terminal phosphate group between ATP and AMP. Plays an important role in cellular energy homeostasis and in adenine nucleotide metabolism. The sequence is that of Adenylate kinase from Ruthia magnifica subsp. Calyptogena magnifica.